A 364-amino-acid polypeptide reads, in one-letter code: GMP reductase (364 aa).

NADP(+) is bound by residues 26-27 (SR), Lys78, 132-134 (DVA), and 183-184 (IG). 3 residues coordinate K(+): Gly184, Gly186, and Cys189. The active-site Thioimidate intermediate is Cys189. Thr191 acts as the Proton donor/acceptor in catalysis. Arg192 lines the K(+) pocket. GMP-binding positions include 222–224 (DGG), 245–246 (GG), 271–273 (GMS), and 289–293 (RASEG). Residues Met272, 288 to 289 (YR), and 317 to 320 (SACT) contribute to the NADP(+) site.

The protein belongs to the IMPDH/GMPR family. GuaC type 1 subfamily. Homotetramer.

It catalyses the reaction IMP + NH4(+) + NADP(+) = GMP + NADPH + 2 H(+). Its function is as follows. Catalyzes the irreversible NADPH-dependent deamination of GMP to IMP. It functions in the conversion of nucleobase, nucleoside and nucleotide derivatives of G to A nucleotides, and in maintaining the intracellular balance of A and G nucleotides. The chain is GMP reductase (gmr-1) from Onchocerca volvulus.